A 259-amino-acid chain; its full sequence is Global transcriptional regulator CodY (259 aa).

Positions 1–155 (MELLAKTRKL…SSTVVGMEIL (155 aa)) are GAF domain. The H-T-H motif DNA-binding region spans 203–222 (ASKIADRVGITRSVIVNALR). Residue Ser-215 is modified to Phosphoserine.

Belongs to the CodY family.

It is found in the cytoplasm. Functionally, DNA-binding global transcriptional regulator which is involved in the adaptive response to starvation and acts by directly or indirectly controlling the expression of numerous genes in response to nutrient availability. During rapid exponential growth, CodY is highly active and represses genes whose products allow adaptation to nutrient depletion. The polypeptide is Global transcriptional regulator CodY (Bacillus anthracis (strain A0248)).